Reading from the N-terminus, the 47-residue chain is Large ribosomal subunit protein bL34 (47 aa).

The protein belongs to the bacterial ribosomal protein bL34 family.

The sequence is that of Large ribosomal subunit protein bL34 (rpmH) from Mycolicibacterium smegmatis (strain ATCC 700084 / mc(2)155) (Mycobacterium smegmatis).